Reading from the N-terminus, the 139-residue chain is MGVFHVDIVSAEESIYSGPAEFLVAPAEGGEVGIYPQHTPMLTRIKPGSVRIKAPLKEEELVYVSGGMLEIQPDIVTILADTAVRGADLDEAKAIEAKKHAEEAVRDRASTLDYARAQAELSEAIAQLAAIQKLRKRGH.

The protein belongs to the ATPase epsilon chain family. As to quaternary structure, F-type ATPases have 2 components, CF(1) - the catalytic core - and CF(0) - the membrane proton channel. CF(1) has five subunits: alpha(3), beta(3), gamma(1), delta(1), epsilon(1). CF(0) has three main subunits: a, b and c.

It localises to the cell inner membrane. Produces ATP from ADP in the presence of a proton gradient across the membrane. This Nitrosospira multiformis (strain ATCC 25196 / NCIMB 11849 / C 71) protein is ATP synthase epsilon chain.